A 251-amino-acid polypeptide reads, in one-letter code: Ubiquinone/menaquinone biosynthesis C-methyltransferase UbiE (251 aa).

Residues Thr74, Asp95, 123–124, and Ser140 contribute to the S-adenosyl-L-methionine site; that span reads NA.

This sequence belongs to the class I-like SAM-binding methyltransferase superfamily. MenG/UbiE family.

It carries out the reaction a 2-demethylmenaquinol + S-adenosyl-L-methionine = a menaquinol + S-adenosyl-L-homocysteine + H(+). It catalyses the reaction a 2-methoxy-6-(all-trans-polyprenyl)benzene-1,4-diol + S-adenosyl-L-methionine = a 5-methoxy-2-methyl-3-(all-trans-polyprenyl)benzene-1,4-diol + S-adenosyl-L-homocysteine + H(+). Its pathway is quinol/quinone metabolism; menaquinone biosynthesis; menaquinol from 1,4-dihydroxy-2-naphthoate: step 2/2. The protein operates within cofactor biosynthesis; ubiquinone biosynthesis. Functionally, methyltransferase required for the conversion of demethylmenaquinol (DMKH2) to menaquinol (MKH2) and the conversion of 2-polyprenyl-6-methoxy-1,4-benzoquinol (DDMQH2) to 2-polyprenyl-3-methyl-6-methoxy-1,4-benzoquinol (DMQH2). The polypeptide is Ubiquinone/menaquinone biosynthesis C-methyltransferase UbiE (Klebsiella pneumoniae (strain 342)).